Here is a 689-residue protein sequence, read N- to C-terminus: DNA ligase (689 aa).

Residues 40 to 44 (DSEYD), 89 to 90 (SL), and E121 contribute to the NAD(+) site. The active-site N6-AMP-lysine intermediate is the K123. NAD(+) contacts are provided by R144, E179, K295, and K319. Zn(2+) is bound by residues C413, C416, C431, and C437. The region spanning 610-689 (REQSSLTDKI…EEWLTLIKNV (80 aa)) is the BRCT domain.

This sequence belongs to the NAD-dependent DNA ligase family. LigA subfamily. Mg(2+) is required as a cofactor. Mn(2+) serves as cofactor.

It catalyses the reaction NAD(+) + (deoxyribonucleotide)n-3'-hydroxyl + 5'-phospho-(deoxyribonucleotide)m = (deoxyribonucleotide)n+m + AMP + beta-nicotinamide D-nucleotide.. DNA ligase that catalyzes the formation of phosphodiester linkages between 5'-phosphoryl and 3'-hydroxyl groups in double-stranded DNA using NAD as a coenzyme and as the energy source for the reaction. It is essential for DNA replication and repair of damaged DNA. In Rickettsia rickettsii (strain Iowa), this protein is DNA ligase.